The following is a 466-amino-acid chain: Fumarate hydratase class II (466 aa).

Substrate contacts are provided by residues 99–101, 129–132, 139–141, and Thr-187; these read SGT, HPND, and SSN. His-188 (proton donor/acceptor) is an active-site residue. Residue Ser-318 is part of the active site. Residues Ser-319 and 324–326 contribute to the substrate site; that span reads KVN.

It belongs to the class-II fumarase/aspartase family. Fumarase subfamily. In terms of assembly, homotetramer.

It is found in the cytoplasm. The enzyme catalyses (S)-malate = fumarate + H2O. It participates in carbohydrate metabolism; tricarboxylic acid cycle; (S)-malate from fumarate: step 1/1. In terms of biological role, involved in the TCA cycle. Catalyzes the stereospecific interconversion of fumarate to L-malate. This chain is Fumarate hydratase class II, found in Thermus aquaticus.